A 356-amino-acid chain; its full sequence is MSTVTITDLARENVRNLTPYQSARRLGGNGDVWLNANEYPTAVEFQLTQQTLNRYPECQPKAVIENYAQYAGVKPEQVLVSRGADEGIELLIRAFCEPGKDSILYCPPTYGMYSVSAETIGVECRTVPTLDNWQLDLQGISDKLDGVKVVYVCSPNNPTGQLINPQDFRTLLELTRGKAIVVADEAYIEFCPQASLAGWLTEYPHLAILRTLSKAFALAGLRCGFTLANEEVINLLMKVIAPYPLSTPVADIAAQALSPQGIVAMRERVAQIIAEREYLIAALKEIPCVEQVFDSETNYILARFKASSAVFKSLWDQGIILRDQNKQPSLSGCLRITVGTREESQRVIDALRAEQV.

Lysine 214 carries the N6-(pyridoxal phosphate)lysine modification.

This sequence belongs to the class-II pyridoxal-phosphate-dependent aminotransferase family. Histidinol-phosphate aminotransferase subfamily. As to quaternary structure, homodimer. It depends on pyridoxal 5'-phosphate as a cofactor.

It catalyses the reaction L-histidinol phosphate + 2-oxoglutarate = 3-(imidazol-4-yl)-2-oxopropyl phosphate + L-glutamate. It participates in amino-acid biosynthesis; L-histidine biosynthesis; L-histidine from 5-phospho-alpha-D-ribose 1-diphosphate: step 7/9. In Shigella boydii serotype 18 (strain CDC 3083-94 / BS512), this protein is Histidinol-phosphate aminotransferase.